The primary structure comprises 179 residues: Putative manganese efflux pump MntP (179 aa).

Helical transmembrane passes span 4 to 24 (VLILAFALSMDAFAVSIGLGI), 39 to 59 (LFFGIFQALMPFLGFLGGIGL), 69 to 89 (IVAFILLLAIGGKMIYEAFNE), 102 to 122 (ILLTLAIATSLDAMAAGYSLH), 128 to 148 (IYLSLFVIGFTTFIISYIGVY), and 159 to 179 (SKAEILGGVVLILIGLKILLF).

Belongs to the MntP (TC 9.B.29) family.

It is found in the cell inner membrane. Probably functions as a manganese efflux pump. In Aliarcobacter butzleri (strain RM4018) (Arcobacter butzleri), this protein is Putative manganese efflux pump MntP.